The primary structure comprises 328 residues: Tetraacyldisaccharide 4'-kinase (328 aa).

55 to 62 (TAGGNGKT) is an ATP binding site.

It belongs to the LpxK family.

It catalyses the reaction a lipid A disaccharide + ATP = a lipid IVA + ADP + H(+). The protein operates within glycolipid biosynthesis; lipid IV(A) biosynthesis; lipid IV(A) from (3R)-3-hydroxytetradecanoyl-[acyl-carrier-protein] and UDP-N-acetyl-alpha-D-glucosamine: step 6/6. In terms of biological role, transfers the gamma-phosphate of ATP to the 4'-position of a tetraacyldisaccharide 1-phosphate intermediate (termed DS-1-P) to form tetraacyldisaccharide 1,4'-bis-phosphate (lipid IVA). The chain is Tetraacyldisaccharide 4'-kinase from Escherichia coli O139:H28 (strain E24377A / ETEC).